Here is a 431-residue protein sequence, read N- to C-terminus: ORC1-type DNA replication protein 14 (431 aa).

ATP contacts are provided by residues 62–66 (TGKSL), Tyr219, and Arg231.

The protein belongs to the CDC6/cdc18 family.

Its function is as follows. Involved in regulation of DNA replication. The polypeptide is ORC1-type DNA replication protein 14 (cdc6n) (Haloarcula marismortui (strain ATCC 43049 / DSM 3752 / JCM 8966 / VKM B-1809) (Halobacterium marismortui)).